The sequence spans 238 residues: Probable amino-acid ABC transporter permease protein y4tF (238 aa).

In terms of domain architecture, ABC transmembrane type-1 spans 29 to 223 (AWVTIQFTLY…GIALVLSFFM (195 aa)). 5 helical membrane passes run 33–53 (IQFTLYSMFFGAVCSFAFGIG), 77–97 (LLVQLFWLFFALPIAGDMMGI), 103–123 (PVVAGVLALSLNLGAYGAEIV), 152–172 (VALPQAIPEMMPSFSNLAIAA), and 203–223 (TVYTMVLLMYFGIALVLSFFM).

This sequence belongs to the binding-protein-dependent transport system permease family. HisMQ subfamily.

It localises to the cell inner membrane. Probably part of the binding-protein-dependent transport system y4tEFGH for an amino acid. Probably responsible for the translocation of the substrate across the membrane. In Sinorhizobium fredii (strain NBRC 101917 / NGR234), this protein is Probable amino-acid ABC transporter permease protein y4tF.